A 142-amino-acid polypeptide reads, in one-letter code: Large ribosomal subunit protein uL13 (142 aa).

It belongs to the universal ribosomal protein uL13 family. Part of the 50S ribosomal subunit.

Its function is as follows. This protein is one of the early assembly proteins of the 50S ribosomal subunit, although it is not seen to bind rRNA by itself. It is important during the early stages of 50S assembly. This is Large ribosomal subunit protein uL13 from Xanthomonas campestris pv. campestris (strain ATCC 33913 / DSM 3586 / NCPPB 528 / LMG 568 / P 25).